The sequence spans 433 residues: Xylose isomerase (433 aa).

Active-site residues include His-99 and Asp-102. Residues Glu-230, Glu-266, His-269, Asp-294, Asp-305, Asp-307, and Asp-337 each contribute to the Mg(2+) site.

It belongs to the xylose isomerase family. As to quaternary structure, homotetramer. The cofactor is Mg(2+).

The protein localises to the cytoplasm. The catalysed reaction is alpha-D-xylose = alpha-D-xylulofuranose. This Cereibacter sphaeroides (strain ATCC 17025 / ATH 2.4.3) (Rhodobacter sphaeroides) protein is Xylose isomerase.